Consider the following 602-residue polypeptide: Protein indeterminate-domain 5, chloroplastic (602 aa).

2 stretches are compositionally biased toward low complexity: residues 1–10 and 21–30; these read MAASSSSAAS and HLLPPNSSAA. The transit peptide at 1 to 50 directs the protein to the chloroplast; it reads MAASSSSAASFFGVRQDDQSHLLPPNSSAAAPPPPPPHHQAPLPPLEAPP. Residues 1 to 65 are disordered; it reads MAASSSSAAS…NQPRTPNSDA (65 aa). A compositionally biased stretch (pro residues) spans 31 to 48; that stretch reads APPPPPPHHQAPLPPLEA. Thr60 is modified (phosphothreonine). Residue Ser71 is modified to Phosphoserine. 2 consecutive C2H2-type zinc fingers follow at residues 81–103 and 122–152; these read FICE…RRGH and YLCP…YRKH. The C2H2-type 2; degenerate zinc-finger motif lies at 157 to 180; it reads WKCDKCSKRYAVQSDWKAHSKTCG. Zn(2+) is bound by residues Cys159, Cys162, His175, Cys179, Cys186, Cys188, His201, and Cys205. Residues 184 to 207 form a CCHC-type 2; atypical zinc finger; sequence YRCDCGTLFSRRDSFITHRAFCDA. The SHR-binding stretch occupies residues 194–206; that stretch reads RRDSFITHRAFCD. Disordered regions lie at residues 443–467 and 537–602; these read KAAQ…NNAS and KSMS…HASF. Low complexity-rich tracts occupy residues 448–467, 546–560, and 570–579; these read GSTS…NNAS, QQQQ…QQQQ, and SSSDSADRSS.

In terms of assembly, binds to RGA and SCL3 competitively. As to expression, highly expressed in leaf tissues.

The protein localises to the plastid. It is found in the chloroplast. Its function is as follows. Transcription factor acting as a positive regulator of the starch synthase SS4. Controls chloroplast development and starch granule formation. Binds DNA via its zinc fingers. Recognizes and binds to SCL3 promoter sequence 5'-AGACAA-3' to promote its expression when in complex with RGA. The polypeptide is Protein indeterminate-domain 5, chloroplastic (Arabidopsis thaliana (Mouse-ear cress)).